A 225-amino-acid chain; its full sequence is Ribosome maturation factor RimM (225 aa).

Residues 144–225 (ADEFYWVDLI…RIVVDWEADY (82 aa)) form the PRC barrel domain.

It belongs to the RimM family. As to quaternary structure, binds ribosomal protein uS19.

It is found in the cytoplasm. Functionally, an accessory protein needed during the final step in the assembly of 30S ribosomal subunit, possibly for assembly of the head region. Essential for efficient processing of 16S rRNA. May be needed both before and after RbfA during the maturation of 16S rRNA. It has affinity for free ribosomal 30S subunits but not for 70S ribosomes. This Burkholderia orbicola (strain MC0-3) protein is Ribosome maturation factor RimM.